We begin with the raw amino-acid sequence, 249 residues long: Metal-staphylopine import system ATP-binding protein CntF (249 aa).

Residues 2–244 (IKIKDVEKSY…DNAYTRELIE (243 aa)) form the ABC transporter domain. Position 42 to 49 (42 to 49 (GESGSGKS)) interacts with ATP.

This sequence belongs to the ABC transporter superfamily. The complex is composed of two ATP-binding proteins (CntD and CntF), two transmembrane proteins (CntB and CntC) and a solute-binding protein (CntA).

It is found in the cell membrane. Its activity is regulated as follows. Nickel/cobalt import is reduced in the presence of zinc. In terms of biological role, part of the ABC transporter complex CntABCDF (Opp1) involved in the uptake of metal in complex with the metallophore staphylopine (StP). Involved in the import of divalent metals ions such as nickel, cobalt and zinc. Probably responsible for energy coupling to the transport system. Plays a major role in nickel/cobalt import in zinc-depleted conditions. Contributes to virulence. Required for full urease activity in vitro. The polypeptide is Metal-staphylopine import system ATP-binding protein CntF (Staphylococcus aureus (strain NCTC 8325 / PS 47)).